Reading from the N-terminus, the 208-residue chain is Methenyltetrahydrofolate cyclohydrolase (208 aa).

The helical transmembrane segment at 25–46 threads the bilayer; that stretch reads GAAAISGAMGAALVSMVCNLTI.

Belongs to the cyclodeaminase/cyclohydrolase family. As to quaternary structure, homodimer.

Its subcellular location is the membrane. It catalyses the reaction (6R)-5,10-methenyltetrahydrofolate + H2O = (6R)-10-formyltetrahydrofolate + H(+). Its pathway is one-carbon metabolism; formaldehyde assimilation via serine pathway. Its function is as follows. Required for both C1 and C2 metabolism. This is Methenyltetrahydrofolate cyclohydrolase (fchA) from Methylorubrum extorquens (strain ATCC 14718 / DSM 1338 / JCM 2805 / NCIMB 9133 / AM1) (Methylobacterium extorquens).